The primary structure comprises 449 residues: Zinc finger and BTB domain-containing protein 14 (449 aa).

Residues 36 to 102 enclose the BTB domain; it reads CDIAIVVEDV…MYTAKISVKK (67 aa). Lys46 participates in a covalent cross-link: Glycyl lysine isopeptide (Lys-Gly) (interchain with G-Cter in SUMO2). The Nuclear localization signal signature appears at 50–66; the sequence is HRCVLAACSTYFKKLFK. The segment at 153-194 is disordered; that stretch reads GDAADTQDDDVEEIGDQDDSPSDDTVEGTPPSQEDGKSPTTT. The segment covering 157-178 has biased composition (acidic residues); sequence DTQDDDVEEIGDQDDSPSDDTV. Residues Lys203 and Lys249 each participate in a glycyl lysine isopeptide (Lys-Gly) (interchain with G-Cter in SUMO2) cross-link. 5 C2H2-type zinc fingers span residues 277–304, 305–332, 333–360, 361–388, and 389–417; these read IACQ…ADRP, FVCE…GYKP, YSCE…NERP, FACH…GEKP, and FVCG…ERKQ.

It belongs to the krueppel C2H2-type zinc-finger protein family. Interacts with ZBTB21.

Its subcellular location is the nucleus. Transcriptional activator of the dopamine transporter (DAT), binding it's promoter at the consensus sequence 5'-CCTGCACAGTTCACGGA-3'. Binds to 5'-d(GCC)(n)-3' trinucleotide repeats in promoter regions and acts as a repressor of the FMR1 gene. Transcriptional repressor of MYC and thymidine kinase promoters. This chain is Zinc finger and BTB domain-containing protein 14 (ZBTB14), found in Homo sapiens (Human).